Consider the following 132-residue polypeptide: MAITYSVGDMLTKLRNASRVKHGSVDLKMSNMNKSILNILKEEGYIKDFNFLEKEGIAFIKVLLKYDNKRNPVINKIDAISTPGRKIYSSYKNMPRIKNGYGILIISSSKGVITGKEAKNKKIGGELICSVW.

This sequence belongs to the universal ribosomal protein uS8 family. As to quaternary structure, part of the 30S ribosomal subunit. Contacts proteins S5 and S12.

Functionally, one of the primary rRNA binding proteins, it binds directly to 16S rRNA central domain where it helps coordinate assembly of the platform of the 30S subunit. The chain is Small ribosomal subunit protein uS8 from Borrelia garinii subsp. bavariensis (strain ATCC BAA-2496 / DSM 23469 / PBi) (Borreliella bavariensis).